The following is a 261-amino-acid chain: Cytochrome c oxidase subunit 3 (261 aa).

Residues 1-15 (MTHQTHAYHMVNPSP) are Mitochondrial matrix-facing. A helical transmembrane segment spans residues 16 to 34 (WPLTGALSALLLTSGLMMW). The Mitochondrial intermembrane portion of the chain corresponds to 35 to 40 (FHFNNP). Residues 41-66 (TLLVLGLLTNLISSYQWWRDIVREGT) form a helical membrane-spanning segment. Over 67 to 72 (YQGHHT) the chain is Mitochondrial matrix. A helical transmembrane segment spans residues 73–105 (KVVQKGLRYGMVLFIISEVFFFLGFFWAFYHSS). The Mitochondrial intermembrane segment spans residues 106 to 128 (LAPTPELGGCWPPTGISPLNPLE). Residues 129–152 (VPLLNTSILLASGVSITWSHHSLM) traverse the membrane as a helical segment. Topologically, residues 153–155 (EGN) are mitochondrial matrix. Residues 156-183 (RKQMIQALMITIALGLYFTALQAMEYYE) form a helical membrane-spanning segment. Over 184–190 (SSFTISD) the chain is Mitochondrial intermembrane. Residues 191–223 (GVYGSTFFVATGFHGLHVIIGTTFLITCLLRQL) traverse the membrane as a helical segment. Topologically, residues 224-232 (LYHFTSNHH) are mitochondrial matrix. Residues 233 to 256 (FGFEAAAWYWHFVDVVWLFLYVSI) traverse the membrane as a helical segment. Over 257–261 (YWWGS) the chain is Mitochondrial intermembrane.

The protein belongs to the cytochrome c oxidase subunit 3 family. Component of the cytochrome c oxidase (complex IV, CIV), a multisubunit enzyme composed of 14 subunits. The complex is composed of a catalytic core of 3 subunits MT-CO1, MT-CO2 and MT-CO3, encoded in the mitochondrial DNA, and 11 supernumerary subunits COX4I, COX5A, COX5B, COX6A, COX6B, COX6C, COX7A, COX7B, COX7C, COX8 and NDUFA4, which are encoded in the nuclear genome. The complex exists as a monomer or a dimer and forms supercomplexes (SCs) in the inner mitochondrial membrane with NADH-ubiquinone oxidoreductase (complex I, CI) and ubiquinol-cytochrome c oxidoreductase (cytochrome b-c1 complex, complex III, CIII), resulting in different assemblies (supercomplex SCI(1)III(2)IV(1) and megacomplex MCI(2)III(2)IV(2)).

It localises to the mitochondrion inner membrane. The enzyme catalyses 4 Fe(II)-[cytochrome c] + O2 + 8 H(+)(in) = 4 Fe(III)-[cytochrome c] + 2 H2O + 4 H(+)(out). Component of the cytochrome c oxidase, the last enzyme in the mitochondrial electron transport chain which drives oxidative phosphorylation. The respiratory chain contains 3 multisubunit complexes succinate dehydrogenase (complex II, CII), ubiquinol-cytochrome c oxidoreductase (cytochrome b-c1 complex, complex III, CIII) and cytochrome c oxidase (complex IV, CIV), that cooperate to transfer electrons derived from NADH and succinate to molecular oxygen, creating an electrochemical gradient over the inner membrane that drives transmembrane transport and the ATP synthase. Cytochrome c oxidase is the component of the respiratory chain that catalyzes the reduction of oxygen to water. Electrons originating from reduced cytochrome c in the intermembrane space (IMS) are transferred via the dinuclear copper A center (CU(A)) of subunit 2 and heme A of subunit 1 to the active site in subunit 1, a binuclear center (BNC) formed by heme A3 and copper B (CU(B)). The BNC reduces molecular oxygen to 2 water molecules using 4 electrons from cytochrome c in the IMS and 4 protons from the mitochondrial matrix. This Tachyglossus aculeatus aculeatus (Southeast Australian short-beaked echidna) protein is Cytochrome c oxidase subunit 3 (MT-CO3).